The following is a 201-amino-acid chain: Small ribosomal subunit protein uS4 (201 aa).

The interval 1 to 42 (MARYTGPATRKSRRLGVDLVGGDQSFEKRPYPPGQHGRARIK) is disordered. Residues 91–157 (SRLDNVVYRA…LPFQIARETA (67 aa)) form the S4 RNA-binding domain.

Belongs to the universal ribosomal protein uS4 family. Part of the 30S ribosomal subunit. Contacts protein S5. The interaction surface between S4 and S5 is involved in control of translational fidelity.

Functionally, one of the primary rRNA binding proteins, it binds directly to 16S rRNA where it nucleates assembly of the body of the 30S subunit. In terms of biological role, with S5 and S12 plays an important role in translational accuracy. This Mycolicibacterium smegmatis (strain ATCC 700084 / mc(2)155) (Mycobacterium smegmatis) protein is Small ribosomal subunit protein uS4.